We begin with the raw amino-acid sequence, 471 residues long: GDP-mannose transporter (471 aa).

The span at 1 to 13 (MSSGSRSFFTPQE) shows a compositional bias: polar residues. The disordered stretch occupies residues 1–52 (MSSGSRSFFTPQETRLELPQGAAHQTPDITRPASPSENDRAPFLNGGPSDAR). The Cytoplasmic portion of the chain corresponds to 1 to 70 (MSSGSRSFFT…ALRNDSEKPA (70 aa)). Residues 71–91 (VGIMALAPILCYCAASITMTV) traverse the membrane as a helical segment. The Lumenal portion of the chain corresponds to 92-101 (VNKFTVSGRG). A helical membrane pass occupies residues 102 to 122 (FNMNLLVLLIQSTVGVTCVWI). At 123–139 (AERAGLIQLRGLNAKDA) the chain is on the cytoplasmic side. Residues 140 to 160 (WNWMPLSIMLVFVIWTGSKAL) traverse the membrane as a helical segment. At 161-166 (QYLNIS) the chain is on the lumenal side. An N-linked (GlcNAc...) asparagine glycan is attached at Asn164. A helical membrane pass occupies residues 167 to 187 (VYTIFKNLTIILIAYGEVMWF). At 188–193 (GGRVTR) the chain is on the cytoplasmic side. A helical transmembrane segment spans residues 194-214 (IVLCSFLFMVLSSVIAAWSDI). Topologically, residues 215-279 (SNVFAIGNLS…DVIEGFQGYG (65 aa)) are lumenal. A glycan (N-linked (GlcNAc...) asparagine) is linked at Asn222. A helical membrane pass occupies residues 280–300 (LLSSGYVWMALNCICSATYVL). The Cytoplasmic portion of the chain corresponds to 301–315 (LMRKRIKVTGFKDWD). Residues 316–336 (TMFYNNFLSIPVLLLMSFLVE) form a helical membrane-spanning segment. Residues 337–354 (DWSYANLHKNFPDDKQTK) lie on the Lumenal side of the membrane. The chain crosses the membrane as a helical span at residues 355-375 (LISAIVFSGACAILISYTTAW). The Cytoplasmic portion of the chain corresponds to 376–383 (CIRATSST). The chain crosses the membrane as a helical span at residues 384-404 (TYSMVGALNKLPVALSGMVFF). The Lumenal portion of the chain corresponds to 405–408 (HDPP). A helical transmembrane segment spans residues 409–429 (VTFSSVSAIAVGFFAGLVYAF). The Cytoplasmic portion of the chain corresponds to 430-471 (GKNKQAEAAKLGGHASANGSSSMSGSKDGSSLPMHTFNDRKD). The span at 442 to 460 (GHASANGSSSMSGSKDGSS) shows a compositional bias: low complexity. The tract at residues 442 to 471 (GHASANGSSSMSGSKDGSSLPMHTFNDRKD) is disordered.

The protein belongs to the TPT transporter family. SLC35D subfamily. In terms of assembly, homooligomer.

It localises to the golgi apparatus membrane. Its subcellular location is the cytoplasmic vesicle membrane. The protein resides in the endoplasmic reticulum membrane. Involved in the import of GDP-mannose from the cytoplasm into the Golgi lumen. The protein is GDP-mannose transporter (VRG4) of Mycosarcoma maydis (Corn smut fungus).